A 167-amino-acid polypeptide reads, in one-letter code: U-scoloptoxin(08)-Er5b (167 aa).

Residues 1–22 form the signal peptide; that stretch reads MKTNCEFPLLCLLIVLVANVEG. Residues 23 to 94 constitute a propeptide that is removed on maturation; it reads EVEDTGLKMV…KRLWRNWERR (72 aa). RLWRNWE repeat units lie at residues 34-40, 61-67, and 86-92; these read RLWRNWE. Glutamine 95 is modified (pyrrolidone carboxylic acid). The RLWRNWE 4; approximate repeat unit spans residues 107–113; that stretch reads ELWRNWE. Positions 112 to 118 are excised as a propeptide; it reads WEDLKRR. Glutamine 119 is modified (pyrrolidone carboxylic acid). The stretch at 134-140 is one RLWRNWE 5 repeat; that stretch reads RLWRNWE. Positions 139–167 are excised as a propeptide; sequence WEDNHATLRKRSADSLSRQKRLGKERGKE. The segment at 147 to 167 is disordered; it reads RKRSADSLSRQKRLGKERGKE.

The protein belongs to the scoloptoxin-08 family. As to expression, expressed by the venom gland.

The protein localises to the secreted. This is U-scoloptoxin(08)-Er5b from Ethmostigmus rubripes (Giant centipede).